The primary structure comprises 244 residues: CTD nuclear envelope phosphatase 1 (244 aa).

A helical transmembrane segment spans residues 7–29 (LLGLRTFVAFAAKLWSFFIYLLR). Residues 57–224 (AQVKRKILVL…LNLLPMLDAL (168 aa)) enclose the FCP1 homology domain.

This sequence belongs to the dullard family. As to quaternary structure, interacts with CNEP1R1; the complex dephosphorylates LPIN1 and LPIN2. In terms of tissue distribution, muscle specific with lower expression in other metabolic tissues.

The protein resides in the endoplasmic reticulum membrane. It is found in the nucleus membrane. The enzyme catalyses O-phospho-L-seryl-[protein] + H2O = L-seryl-[protein] + phosphate. It carries out the reaction O-phospho-L-threonyl-[protein] + H2O = L-threonyl-[protein] + phosphate. In terms of biological role, serine/threonine protein phosphatase forming with CNEP1R1 an active phosphatase complex that dephosphorylates and may activate LPIN1 and LPIN2. LPIN1 and LPIN2 are phosphatidate phosphatases that catalyze the conversion of phosphatidic acid to diacylglycerol and control the metabolism of fatty acids at different levels. May indirectly modulate the lipid composition of nuclear and/or endoplasmic reticulum membranes and be required for proper nuclear membrane morphology and/or dynamics. May also indirectly regulate the production of lipid droplets and triacylglycerol. May antagonize BMP signaling. This chain is CTD nuclear envelope phosphatase 1 (Ctdnep1), found in Mus musculus (Mouse).